The following is a 498-amino-acid chain: ATP synthase subunit beta, chloroplastic (498 aa).

172–179 (GGAGVGKT) lines the ATP pocket.

The protein belongs to the ATPase alpha/beta chains family. F-type ATPases have 2 components, CF(1) - the catalytic core - and CF(0) - the membrane proton channel. CF(1) has five subunits: alpha(3), beta(3), gamma(1), delta(1), epsilon(1). CF(0) has four main subunits: a(1), b(1), b'(1) and c(9-12).

The protein localises to the plastid. The protein resides in the chloroplast thylakoid membrane. The catalysed reaction is ATP + H2O + 4 H(+)(in) = ADP + phosphate + 5 H(+)(out). In terms of biological role, produces ATP from ADP in the presence of a proton gradient across the membrane. The catalytic sites are hosted primarily by the beta subunits. The protein is ATP synthase subunit beta, chloroplastic of Nandina domestica (Heavenly bamboo).